Reading from the N-terminus, the 68-residue chain is ATP synthase subunit K, mitochondrial (68 aa).

A helical membrane pass occupies residues 15-31 (HQLAIGTLGLLGLLVVP).

This sequence belongs to the ATP19 family. F-type ATPases have 2 components, CF(1) - the catalytic core - and CF(0) - the membrane proton channel. In yeast, the dimeric form of ATP synthase consists of 17 polypeptides: alpha, beta, gamma, delta, epsilon, 4 (B), 5 (OSCP), 6 (A), 8, 9 (C), d, E (Tim11), f, g, h, i/j and k.

It localises to the mitochondrion inner membrane. Its function is as follows. Mitochondrial membrane ATP synthase (F(1)F(0) ATP synthase or Complex V) produces ATP from ADP in the presence of a proton gradient across the membrane which is generated by electron transport complexes of the respiratory chain. F-type ATPases consist of two structural domains, F(1) - containing the extramembraneous catalytic core and F(0) - containing the membrane proton channel, linked together by a central stalk and a peripheral stalk. During catalysis, ATP synthesis in the catalytic domain of F(1) is coupled via a rotary mechanism of the central stalk subunits to proton translocation. Part of the complex F(0) domain. Minor subunit located with subunit a in the membrane. The K chain binds the dimeric form by interacting with the G and E chains. The protein is ATP synthase subunit K, mitochondrial (ATP19) of Saccharomyces cerevisiae (strain ATCC 204508 / S288c) (Baker's yeast).